Consider the following 64-residue polypeptide: Small ribosomal subunit protein bS21 (64 aa).

Residues 42–64 (KKEKEKAAAKKRNKYNKRRSFYY) form a disordered region. The segment covering 50–64 (AKKRNKYNKRRSFYY) has biased composition (basic residues).

The protein belongs to the bacterial ribosomal protein bS21 family.

The protein is Small ribosomal subunit protein bS21 of Malacoplasma penetrans (strain HF-2) (Mycoplasma penetrans).